Consider the following 171-residue polypeptide: Transcription antitermination protein NusB (171 aa).

It belongs to the NusB family.

In terms of biological role, involved in transcription antitermination. Required for transcription of ribosomal RNA (rRNA) genes. Binds specifically to the boxA antiterminator sequence of the ribosomal RNA (rrn) operons. This chain is Transcription antitermination protein NusB, found in Brucella ovis (strain ATCC 25840 / 63/290 / NCTC 10512).